We begin with the raw amino-acid sequence, 58 residues long: MSKTVVRKNESLDDALRRFKRSVTKAGTLQESRKREFYEKLSVKRKRKSEAARKRKKF.

The protein belongs to the bacterial ribosomal protein bS21 family.

The sequence is that of Small ribosomal subunit protein bS21 from Streptococcus pyogenes serotype M49 (strain NZ131).